We begin with the raw amino-acid sequence, 663 residues long: UvrABC system protein B (663 aa).

A Helicase ATP-binding domain is found at 31–271 (DNIESGEKAQ…EQSISKIQAE (241 aa)). 44 to 51 (GATGTGKT) lines the ATP pocket. The Beta-hairpin signature appears at 97-120 (YYDYYQPEAYVPSSDTYIEKDSSV). Residues 435–601 (QMDDLLGEIN…TIKKDIRDLI (167 aa)) enclose the Helicase C-terminal domain. In terms of domain architecture, UVR spans 627–662 (QEAIKQLQKNMQEAAELLDFELAAQLRDLILELKAI).

This sequence belongs to the UvrB family. Forms a heterotetramer with UvrA during the search for lesions. Interacts with UvrC in an incision complex.

The protein resides in the cytoplasm. The UvrABC repair system catalyzes the recognition and processing of DNA lesions. A damage recognition complex composed of 2 UvrA and 2 UvrB subunits scans DNA for abnormalities. Upon binding of the UvrA(2)B(2) complex to a putative damaged site, the DNA wraps around one UvrB monomer. DNA wrap is dependent on ATP binding by UvrB and probably causes local melting of the DNA helix, facilitating insertion of UvrB beta-hairpin between the DNA strands. Then UvrB probes one DNA strand for the presence of a lesion. If a lesion is found the UvrA subunits dissociate and the UvrB-DNA preincision complex is formed. This complex is subsequently bound by UvrC and the second UvrB is released. If no lesion is found, the DNA wraps around the other UvrB subunit that will check the other stand for damage. The polypeptide is UvrABC system protein B (Streptococcus equi subsp. zooepidemicus (strain MGCS10565)).